The following is a 380-amino-acid chain: Ceramide-binding protein svf1 (380 aa).

The interval 1–18 (MKAWLQSSISYYTGTAEP) is peripherally associates with membranes.

Belongs to the SVF1 family.

The protein localises to the golgi apparatus. The protein resides in the cis-Golgi network membrane. Its subcellular location is the endoplasmic reticulum membrane. It is found in the cytoplasm. It localises to the nucleus. In terms of biological role, ceramide-binding protein that may transfer ceramides from the endoplasmic reticulum membrane to the cis-Golgi network membrane, and is thereby required for the biosynthesis of complex sphingolipids. The sequence is that of Ceramide-binding protein svf1 from Schizosaccharomyces pombe (strain 972 / ATCC 24843) (Fission yeast).